Reading from the N-terminus, the 487-residue chain is WAS/WASL-interacting protein family member 1 (487 aa).

Over residues 1–14 (MPVPPPPAPPPPPT) the composition is skewed to pro residues. The interval 1 to 487 (MPVPPPPAPP…GAPPLPPIPR (487 aa)) is disordered. Polar residues predominate over residues 21-31 (EKPSLNKTEQA). The 18-residue stretch at 32 to 49 (GRNALLSDISKGKKLKKT) folds into the WH2 domain. Asymmetric dimethylarginine is present on arginine 33. A binds actin region spans residues 45-48 (KLKK). Over residues 64–100 (GAGGGYGGGSGGGGGGGSSGGGGNFGGGGPPGLGGLF) the composition is skewed to gly residues. An omega-N-methylarginine mark is found at arginine 121 and arginine 130. A compositionally biased stretch (low complexity) spans 136-147 (PFSSPSGPGRFP). At serine 138 the chain carries Phosphoserine. Composition is skewed to pro residues over residues 157 to 170 (PPEP…PPRP) and 178 to 190 (SLPP…PRPI). Position 222 is a phosphoserine (serine 222). Composition is skewed to pro residues over residues 234-243 (FPRPPLPPTP), 269-285 (VPPP…PSTP), and 293-309 (APPP…PLPP). Residue serine 324 is modified to Phosphoserine. Positions 328-355 (PTPPLPSPGRSGPLPPPPTERPPPPVRD) are enriched in pro residues. Threonine 329 is modified (phosphothreonine). Serine 334 is subject to Phosphoserine. 3 XRSGPXPPXP motif repeats span residues 336-345 (GRSGPLPPPP), 358-367 (GRSGPLPPPP), and 394-403 (PRSGPRPPLP). The span at 397-418 (GPRPPLPPDRPGAGAPPPPPPS) shows a compositional bias: pro residues. Residues 419–428 (TSVRNGFQDS) are compositionally biased toward polar residues. A compositionally biased stretch (basic and acidic residues) spans 464–478 (ARSESRSGSNRRERG).

The protein belongs to the verprolin family. In terms of assembly, binds to WAS within the N-terminal region, at a site distinct from the CDC42-binding site. Binds profilin and actin. Interacts with DBNL. Binds to WASL. Interacts with DBNL. Interacts with FNBP1L (via the SH3 domain). As to expression, isoforms were differentially expressed. One isoform was ubiquitously expressed, another was muscle-specific and another was expressed in the liver, heart and testis.

It localises to the cytoplasmic vesicle. Its subcellular location is the cytoplasm. The protein resides in the cytoskeleton. It is found in the cell projection. The protein localises to the ruffle. Functionally, plays a role in the reorganization of the actin cytoskeleton. Contributes with NCK1 and GRB2 in the recruitment and activation of WASL. Plays a role in the formation of cell ruffles. May participate in regulating the subcellular localization of WASL, resulting in the disassembly of stress fibers in favor of filopodia formation. This chain is WAS/WASL-interacting protein family member 1 (Wipf1), found in Rattus norvegicus (Rat).